Reading from the N-terminus, the 121-residue chain is Chromosome transmission fidelity protein 8 homolog (121 aa).

The protein belongs to the CTF8 family. As to quaternary structure, component of the CTF18-RFC complex, which consists of CTF18, CTF8, DSCC1, RFC2, RFC3, RFC4 and RFC5. The CTF18-RFC complex does not interact with the Rad9/Rad1/Hus1 complex. The CTF18-RFC complex interacts with POLH. CTF18/CTF8/DSCC1 associate with PCNA. CTF8 exists as a dimer with DSCC1.

Its subcellular location is the nucleus. Chromosome cohesion factor involved in sister chromatid cohesion and fidelity of chromosome transmission. Component of one of the cell nuclear antigen loader complexes, CTF18-replication factor C (CTF18-RFC), which consists of CTF18, CTF8, DSCC1, RFC2, RFC3, RFC4 and RFC5. The CTF18-RFC complex binds to single-stranded and primed DNAs and has weak ATPase activity that is stimulated the presence of primed DNA, replication protein A (RPA) and proliferating cell nuclear antigen (PCNA). The CTF18-RFC complex catalyzes the ATP-dependent loading of PCNA onto primed and gapped DNA. It also interacts with and stimulates POLH, which is suggestive of a protein network that coordinates DNA repair, recombination and chromosome cohesion reactions with replication fork progression. The polypeptide is Chromosome transmission fidelity protein 8 homolog (Homo sapiens (Human)).